Here is a 170-residue protein sequence, read N- to C-terminus: Cyclic pyranopterin monophosphate synthase (170 aa).

Residues 75–77 (LCH) and 113–114 (ME) contribute to the substrate site. Residue aspartate 128 is part of the active site.

The protein belongs to the MoaC family. As to quaternary structure, homohexamer; trimer of dimers.

It catalyses the reaction (8S)-3',8-cyclo-7,8-dihydroguanosine 5'-triphosphate = cyclic pyranopterin phosphate + diphosphate. It participates in cofactor biosynthesis; molybdopterin biosynthesis. Catalyzes the conversion of (8S)-3',8-cyclo-7,8-dihydroguanosine 5'-triphosphate to cyclic pyranopterin monophosphate (cPMP). In Pelotomaculum thermopropionicum (strain DSM 13744 / JCM 10971 / SI), this protein is Cyclic pyranopterin monophosphate synthase.